We begin with the raw amino-acid sequence, 395 residues long: MSNSRMNGVEKLSSKSTRRVANAGKATLLALGKAFPSQVVPQENLVEGFLRDTKCDDAFIKEKLEHLCKTTTVKTRYTVLTREILAKYPELTTEGSPTIKQRLEIANEAVVEMALEASLGCIKEWGRPVEDITHIVYVSSSEIRLPGGDLYLSAKLGLRNDVNRVMLYFLGCYGGVTGLRVAKDIAENNPGSRVLLTTSETTILGFRPPNKARPYDLVGAALFGDGAAAVIIGADPRECEAPFMELHYAVQQFLPGTQNVIEGRLTEEGINFKLGRDLPQKIEENIEEFCKKLMGKAGDESMEFNDMFWAVHPGGPAILNRLETKLKLEKEKLESSRRALVDYGNVSSNTILYVMEYMRDELKKKGDAAQEWGLGLAFGPGITFEGLLIRSLTSS.

Residue 63-70 (KLEHLCKT) coordinates CoA. Cys172 acts as the Nucleophile in catalysis. 224-225 (GD) serves as a coordination point for substrate. Residues Leu274, 314–317 (GGPA), and Ala317 contribute to the CoA site.

It belongs to the thiolase-like superfamily. Chalcone/stilbene synthases family. Homodimer. Interacts with 4CLL1/ACOS5 and TKPR1. As to expression, expressed in flowers and flower buds (at protein level), and, at very low levels, in roots, seedlings, leaves and stems. Mostly confined to anther tapetal cells.

The protein localises to the endoplasmic reticulum. It participates in secondary metabolite biosynthesis; flavonoid biosynthesis. Plant type III polyketide synthases (PKSs) that catalyzes the condensation of malonyl-CoA units with various CoA ester starter molecules to generate a diverse array of natural products including long-chain alkyl alpha-pyrones. Accepts up to C(20) chain-length fatty acyl CoAs as starter substrates, and carries out sequential condensations with malonyl-CoA to produce triketide and tetraketide alpha-pyrones, potential sporopollenin precursors. Favorite substrates for are midchain- and v-hydroxylated fatty acyl-CoAs (e.g. 12-hydroxyoctadecanoyl-CoA and 16-hydroxyhexadecanoyl-CoA). Required for pollen development and sporopollenin biosynthesis, the major constituent of exine in the outer pollen wall. In vitro, can use 4-coumaroyl-coenzyme A as substrate to produce bis-noryangonin and fatty acyl-coenzyme A as substrate to produce medium-chain alkyl pyrones. May play a role in both the synthesis of pollen fatty acids and phenolics found in exine. In Arabidopsis thaliana (Mouse-ear cress), this protein is Type III polyketide synthase A.